A 402-amino-acid chain; its full sequence is MESLVARFDALQEAILTHIESQESTLESQIQYWENIRKENAIMHYARKQGLTKLGLQPLPTLAVTEYNAKQAIQIHLTLQSLLKSPFASERWTLTDVSAELINTSPQNCLKKGGYDVAVWFDNDRQNAMLYTNWDFLYYQDMNEQWHKVKGEVDYDGLYFTDHTGERAYFTLFSSDAQRFSRTGLWTVHFKTQVISSPIVSSTYSSSFDTEEQQLPGPSTSYSEVTEQASPTRRRKPRKSDATSTTSPETEGVRLRRRRREGKSGPGSGETPRKRRRGGGRGGGETELGSAPSPAEVGSRHRQVERQGLSRLGLLQAEARDPPMILLKGTANSLKCWRYRKVNSNCCNFLFMSTVWNWVGDCSHNHSRMLIAFDSTDQRDAFVKHNLFPKLCTYTYGSLNSL.

The segment at 1 to 202 (MESLVARFDA…QVISSPIVSS (202 aa)) is transactivation domain. The segment at 207–304 (SFDTEEQQLP…AEVGSRHRQV (98 aa)) is disordered. The segment covering 216 to 231 (PGPSTSYSEVTEQASP) has biased composition (polar residues). A DNA-binding domain region spans residues 321–402 (DPPMILLKGT…TYTYGSLNSL (82 aa)). Residue lysine 328 forms a Glycyl lysine isopeptide (Lys-Gly) (interchain with G-Cter in SUMO) linkage.

Belongs to the papillomaviridae E2 protein family. As to quaternary structure, binds DNA as homodimer. Interacts with protein E1; this interaction greatly increases E1 DNA-binding activity. Interacts with protein L1; this interaction enhances E2-dependent replication and transcription activation. Interacts with protein L2; this interaction inhibits E2 transcriptional activity but not DNA replication function E2. Interacts with protein E7; this interaction inhibits E7 oncogenic activity. Interacts with host TAF1; this interaction modulates E2-dependent transcriptional regulation. Interacts with host BRD4; this interaction mediates E2 transcriptional activation function. Additionally, the interaction with host BRD4 on mitotic chromosomes mediates tethering of the viral genome. Interacts with host TOPBP1; this interaction is required for optimal viral DNA replication. Post-translationally, phosphorylated. In terms of processing, sumoylation plays a regulatory role in E2 transcriptional activity.

Its subcellular location is the host nucleus. In terms of biological role, plays a role in the initiation of viral DNA replication. A dimer of E2 interacts with a dimer of E1 in order to improve specificity of E1 DNA binding activity. Once the complex recognizes and binds DNA at specific sites, the E2 dimer is removed from DNA. E2 also regulates viral transcription through binding to the E2RE response element (5'-ACCNNNNNNGGT-3') present in multiple copies in the regulatory regions of the viral genome. Activates or represses transcription depending on E2RE's position with regards to proximal promoter elements including the TATA-box. Repression occurs by sterically hindering the assembly of the transcription initiation complex. The sequence is that of Regulatory protein E2 from Homo sapiens (Human).